The sequence spans 294 residues: 33 kDa chaperonin (294 aa).

Disulfide bonds link Cys-235/Cys-237 and Cys-268/Cys-271.

This sequence belongs to the HSP33 family. Post-translationally, under oxidizing conditions two disulfide bonds are formed involving the reactive cysteines. Under reducing conditions zinc is bound to the reactive cysteines and the protein is inactive.

It localises to the cytoplasm. Its function is as follows. Redox regulated molecular chaperone. Protects both thermally unfolding and oxidatively damaged proteins from irreversible aggregation. Plays an important role in the bacterial defense system toward oxidative stress. This chain is 33 kDa chaperonin, found in Proteus mirabilis (strain HI4320).